Consider the following 114-residue polypeptide: Iron-sulfur cluster insertion protein ErpA (114 aa).

3 residues coordinate iron-sulfur cluster: cysteine 42, cysteine 106, and cysteine 108.

It belongs to the HesB/IscA family. In terms of assembly, homodimer. It depends on iron-sulfur cluster as a cofactor.

In terms of biological role, required for insertion of 4Fe-4S clusters for at least IspG. This Sodalis glossinidius (strain morsitans) protein is Iron-sulfur cluster insertion protein ErpA.